The primary structure comprises 283 residues: Pyridoxal kinase PdxY (283 aa).

Residue S8 participates in substrate binding. 2 residues coordinate ATP: D110 and E147. Position 219 (D219) interacts with substrate.

It belongs to the pyridoxine kinase family. PdxY subfamily. As to quaternary structure, homodimer. Mg(2+) is required as a cofactor.

It catalyses the reaction pyridoxal + ATP = pyridoxal 5'-phosphate + ADP + H(+). The protein operates within cofactor metabolism; pyridoxal 5'-phosphate salvage; pyridoxal 5'-phosphate from pyridoxal: step 1/1. Functionally, pyridoxal kinase involved in the salvage pathway of pyridoxal 5'-phosphate (PLP). Catalyzes the phosphorylation of pyridoxal to PLP. The sequence is that of Pyridoxal kinase PdxY from Leifsonia xyli subsp. xyli (strain CTCB07).